The primary structure comprises 704 residues: G-protein coupled receptor-associated protein LMBRD2B (704 aa).

Residues 1-3 lie on the Extracellular side of the membrane; that stretch reads MSG. A helical membrane pass occupies residues 4-21; the sequence is AALGIEIVVVFFLALFLL. Over 22 to 33 the chain is Cytoplasmic; that stretch reads HRYGDFKKQQRM. Residues 34–54 traverse the membrane as a helical segment; that stretch reads VLFGTLLAWYLCFLIVFILPL. The Extracellular segment spans residues 55–111; the sequence is DVSTTIYNQCLIDQEAQTQTPSVSPVLSEQTTANASISPAKSTQRVCYKPWSYIPDG. A glycan (N-linked (GlcNAc...) asparagine) is linked at N88. The chain crosses the membrane as a helical span at residues 112–132; it reads IMPVFWRVVYWTSQCLTWLLL. Over 133–157 the chain is Cytoplasmic; it reads PFMQSYARSGGFTITGKIKTALIEN. The helical transmembrane segment at 158-178 threads the bilayer; that stretch reads AIYYGTYLFIFGSLLIYVAVH. Residues 179 to 192 are Extracellular-facing; sequence PQWHLSWYELQTIG. The helical transmembrane segment at 193–213 threads the bilayer; it reads ITAANTWGLFLLVLLLGYGLV. Topologically, residues 214-393 are cytoplasmic; it reads DIPRSYWEAS…ECLLKQWFYR (180 aa). Positions 235-266 form a coiled coil; the sequence is KAAKLMTEKADSEENLEDVMEEVRKINESIKY. A helical transmembrane segment spans residues 394–414; that stretch reads VLAVVLALFSVAVVWSECTFF. The Extracellular segment spans residues 415–438; the sequence is STHPVLSLFAVFIQLAERDYNYLY. Residues 439–459 traverse the membrane as a helical segment; the sequence is IEMACFITIFFLCTCVYSTVF. Residues 460 to 481 are Cytoplasmic-facing; it reads RIRVFNYYYLASHHQTDAYSLQ. The chain crosses the membrane as a helical span at residues 482–502; the sequence is FSGMLFCRLTPPLCLNFLGLI. The Extracellular portion of the chain corresponds to 503–527; it reads HMDSAISHQAKKQTAYTSIMGSMRV. The helical transmembrane segment at 528-548 threads the bilayer; sequence LSFIANGFYIYYPMLIVVLCI. Residues 549 to 704 lie on the Cytoplasmic side of the membrane; sequence ATYFSLGTRC…SSRNRIFDDV (156 aa). The stretch at 576–612 forms a coiled coil; it reads DLIDEGRELLRRERRKRQRIEDGENRRREWRERYAQR. 2 disordered regions span residues 613–654 and 672–704; these read DENA…QSGR and TLTD…FDDV. Residues 631 to 654 are compositionally biased toward polar residues; sequence YGETLNANTNRQAKYTRSGSQSGR.

This sequence belongs to the LIMR family.

It localises to the cell membrane. May associate with G-protein coupled receptors and regulate downstream signaling pathways. This Danio rerio (Zebrafish) protein is G-protein coupled receptor-associated protein LMBRD2B (lmbrd2b).